Here is a 132-residue protein sequence, read N- to C-terminus: MAMTDPLGDMLTRIRNGAARRKSSVSTPASKLRARVLDVLQAEGYIRGYSEVEFGNGKAELSIELKYYEGASVIREIARVSKPGRRVYVSVKSIPQVANGLGITILSTPKGVMADHQAREQNVGGEVLCSVF.

It belongs to the universal ribosomal protein uS8 family. As to quaternary structure, part of the 30S ribosomal subunit. Contacts proteins S5 and S12.

Functionally, one of the primary rRNA binding proteins, it binds directly to 16S rRNA central domain where it helps coordinate assembly of the platform of the 30S subunit. The polypeptide is Small ribosomal subunit protein uS8 (Sinorhizobium medicae (strain WSM419) (Ensifer medicae)).